The chain runs to 1768 residues: MRRQRPSVATARDAPSLEVYNIIPIHDFLTEHPSLRYPEVRAAAAALRIVGDLPKPPFADFTPRMDLMDWLGLLFGFQIDNVRNQRENLVLHLANSQMRLQPPPRHPDGLDPTVLRRFRKKLLRNYTNWCSFLGVRCHVTSPIQSRHQTNAVLNLRRELLYVALYLLIWGESANLRFMPECLCYIFHHMAMELNKVLAGEFDDMTGMPYWPSFSGDCAFLKSVVMPIYKTVKTEVESSNNGTKPHSAWRNYDDINEYFWSKRALKSLKWPLDYTSNFFDTTPKSSRVGKTGFVEQRSFWNVYRSFDRLWILLLLYLQAAIIVATSDVKFPWQDRDVEVALLTVFISWAGLRLLQSVLDASTQYSLVSRETYWLFIRLTLKFVVAVAWTVLFSVFYARIWSQKNKDGVWSRAANERVVTFLKVVFVYVIPELLALVLFIVPCIRNWVEELNLGVVYFLTWWFYSKTFVGRGMREGLVDNVKYTLFWIIVLATKFIFSYFLQIRPLIAPTRALLNLKDATYNWHEFFGSTHRIAVGMLWLPVILVYLMDLQIWYSIYSSLVGATIGLFSHLGEIRNIDQLRLRFQFFSSAMQFNLKPEEHLLSPKATMLKKARDAIHRLKLRYGIGQPFNKIESSQVEATWFALIWNEIILTFREEDLISDREVELLELPPNCWNIRVIRWPCFLLCNELLLALSQANELCDAPDHWLWSKICSSEYRRCAVMEAFDSIKFVILKIVKNGTEEESILNRLFMEIDENVENEKITEVYKLTVLLRIHEKLISLLERLMDPEKKVFRIVNILQALYELCAWEFPKTRRSTPQLRQLGLAPISLEADTELLFVNAINLPPLDDVVFYRQIRRVHTILTSRDPMHNVPKNIEARERLAFFSNSLFMTMPQAPSVEKMMAFSVLTPYYDEEVMYRQEMLRAENEDGISTLFYLQRIYEDEWVNFLERMRREGAENENDIWSKKVRDLRLWASYRGQTLSRTVRGMMYYYSALKKLAFLDSASEMDIRMGTQIAPEARRSYYTNDGGDNTLQPTPSQEISRMASGITHLLKGSEYGSAMMKFTYVVACQVYGQHKARGDHRAEEILFLMKNHDALRIAYVDEVDLGRGEVEYYSVLVKFDQQLQREVEIYRIRLPGPLKLGEGKPENQNHALIFTRGDAIQTIDMNQDNHFEEALKMRNLLESFKTYYGIRKPTILGVREKVFTGSVSSLAWFMSAQETSFVTLGQRVLANPLKVRMHYGHPDVFDRFWFVPRGGISKASRVINISEDIFAGFNCTLRGGNVTHHEYIQVGKGRDVGLNQISMFEAKVASGNGEQALSRDVYRLGHRLDFFRMLSFFYTTVGYYFNTMLIVFTVYAFLWGRLYLALSGVEKIAKDRSSSNEALGAILNQQFIIQLGLFTALPMILENSLERGFLPAVWDFITMQLQLASFFYTFSMGTRTHYFGRTILHGGAKYRATGRGFVVEHKKFAENYRLYARTHFIKAIELAIILLVYAAYSPLAKSSFVYILMTISSWFLITSWIISPFLFNPSGFDWLKTVNDFDDFIAWLWSRGGLFTKADQSWFTWWNEEQEHLKTTGVWGKLLEIILDLRFFFFQYSIVYHLRIAENRTSIGVYLISWGCIIGIVAIYITTIYAQKRYSVKEHIKYRFIQFLVILLTVLVVVMMLQFTKLTVVDLLISLLAFVPTGWGLISIAQVLKPFLLSTVVWDTVISVARFYDLFFGLIVMAPVALLSWLPGFQNMQTRILFNEAFSRGLQISIILAGKKST.

The Cytoplasmic portion of the chain corresponds to 1 to 308; it reads MRRQRPSVAT…WNVYRSFDRL (308 aa). The chain crosses the membrane as a helical span at residues 309 to 329; that stretch reads WILLLLYLQAAIIVATSDVKF. The Extracellular portion of the chain corresponds to 330–335; that stretch reads PWQDRD. The chain crosses the membrane as a helical span at residues 336–356; it reads VEVALLTVFISWAGLRLLQSV. The Cytoplasmic segment spans residues 357 to 370; that stretch reads LDASTQYSLVSRET. A helical membrane pass occupies residues 371-391; that stretch reads YWLFIRLTLKFVVAVAWTVLF. Residues 392–421 are Extracellular-facing; the sequence is SVFYARIWSQKNKDGVWSRAANERVVTFLK. A helical membrane pass occupies residues 422–442; the sequence is VVFVYVIPELLALVLFIVPCI. Residues 443–480 are Cytoplasmic-facing; the sequence is RNWVEELNLGVVYFLTWWFYSKTFVGRGMREGLVDNVK. Residues 481 to 501 traverse the membrane as a helical segment; it reads YTLFWIIVLATKFIFSYFLQI. At 502 to 530 the chain is on the extracellular side; that stretch reads RPLIAPTRALLNLKDATYNWHEFFGSTHR. The helical transmembrane segment at 531-551 threads the bilayer; that stretch reads IAVGMLWLPVILVYLMDLQIW. Residues 552 to 1341 are Cytoplasmic-facing; the sequence is YSIYSSLVGA…FFRMLSFFYT (790 aa). Residues 1342 to 1362 form a helical membrane-spanning segment; that stretch reads TVGYYFNTMLIVFTVYAFLWG. At 1363–1386 the chain is on the extracellular side; sequence RLYLALSGVEKIAKDRSSSNEALG. Residues 1387–1407 traverse the membrane as a helical segment; it reads AILNQQFIIQLGLFTALPMIL. Residues 1408-1413 are Cytoplasmic-facing; it reads ENSLER. The chain crosses the membrane as a helical span at residues 1414–1434; that stretch reads GFLPAVWDFITMQLQLASFFY. Over 1435–1481 the chain is Extracellular; the sequence is TFSMGTRTHYFGRTILHGGAKYRATGRGFVVEHKKFAENYRLYARTH. Residues 1482-1502 traverse the membrane as a helical segment; the sequence is FIKAIELAIILLVYAAYSPLA. The Cytoplasmic portion of the chain corresponds to 1503 to 1508; that stretch reads KSSFVY. The chain crosses the membrane as a helical span at residues 1509-1529; sequence ILMTISSWFLITSWIISPFLF. At 1530–1583 the chain is on the extracellular side; that stretch reads NPSGFDWLKTVNDFDDFIAWLWSRGGLFTKADQSWFTWWNEEQEHLKTTGVWGK. The chain crosses the membrane as a helical span at residues 1584–1604; sequence LLEIILDLRFFFFQYSIVYHL. The Cytoplasmic segment spans residues 1605-1612; that stretch reads RIAENRTS. Residues 1613–1633 form a helical membrane-spanning segment; sequence IGVYLISWGCIIGIVAIYITT. Residues 1634-1649 lie on the Extracellular side of the membrane; the sequence is IYAQKRYSVKEHIKYR. The chain crosses the membrane as a helical span at residues 1650 to 1670; sequence FIQFLVILLTVLVVVMMLQFT. The Cytoplasmic portion of the chain corresponds to 1671 to 1673; sequence KLT. The chain crosses the membrane as a helical span at residues 1674–1694; the sequence is VVDLLISLLAFVPTGWGLISI. Topologically, residues 1695–1719 are extracellular; it reads AQVLKPFLLSTVVWDTVISVARFYD. Residues 1720-1740 traverse the membrane as a helical segment; that stretch reads LFFGLIVMAPVALLSWLPGFQ. Residues 1741-1768 lie on the Cytoplasmic side of the membrane; it reads NMQTRILFNEAFSRGLQISIILAGKKST.

Belongs to the glycosyltransferase 48 family. In terms of tissue distribution, ubiquitous.

Its subcellular location is the cell membrane. It carries out the reaction [(1-&gt;3)-beta-D-glucosyl](n) + UDP-alpha-D-glucose = [(1-&gt;3)-beta-D-glucosyl](n+1) + UDP + H(+). Required the formation of the callose wall separating the tetraspores (interstitial wall), but not for the callose wall surrounding the pollen mother cells (peripheral wall). Functionally redudant to CALS12 (GSL5). During plant growth and development, callose is found as a transitory component of the cell plate in dividing cells, is a major component of pollen mother cell walls and pollen tubes, and is found as a structural component of plasmodesmatal canals. In Arabidopsis thaliana (Mouse-ear cress), this protein is Callose synthase 11 (CALS11).